Reading from the N-terminus, the 345-residue chain is NADPH-dependent oxidoreductase 2-alkenal reductase (345 aa).

Residues 52-53, 163-169, G188, K192, Y208, N232, C254, Y260, 284-286, F330, and 334-336 contribute to the NADP(+) site; these read PY, AASGAVG, FVV, and NVG. Position 53 (Y53) interacts with substrate. Y260 contacts substrate.

It belongs to the NADP-dependent oxidoreductase L4BD family. Homodimer. In terms of tissue distribution, expressed in leaves.

The protein resides in the cytoplasm. It is found in the nucleus. Its subcellular location is the nucleoplasm. The enzyme catalyses an n-alkanal + NAD(+) = an alk-2-enal + NADH + H(+). The catalysed reaction is an n-alkanal + NADP(+) = an alk-2-enal + NADPH + H(+). Inhibited by N-ethylmaleimide and p-chloromercuribenzoic acid. In terms of biological role, involved in the detoxification of reactive carbonyls. Acts on lipid peroxide-derived reactive aldehydes. Specific to a double bond activated by an adjacent carbonyl group. Can use both quinones and diamide as substrates, but not menadione, ferricyanide or phylloquinone. Can use 4-hydroxy-(2E)-nonenal (HNE), 4-hydroxy-(2E)-hexenal (HHE), (2E)-nonenal, (2E)-hexenal, (2E)-pentenal, propenal (acrolein), 3-buten-2-one and 3-penten-2-one, but not (R)-(-)-carvone, n-nonanal, n-hexanal, (3Z)-hexanal, cyclohex-2-en-1-one or 12-oxo phytodienoic acid (OPDA) as electron acceptors. Catalyzes the reduction of the alpha,beta-unsaturated bond of 2-alkenals, of lipid peroxide-derived oxenes 9-oxo-10(E),12(Z)-octadecadienoic acid (9-KODE) and 13-oxo-9(Z),11(E)-octadecadienoic acid (13-KODE), as well as 4-oxo-(2E)-nonenal and 4-hydroxynonenal. Can use 12-oxo-10(E) dodecanoate (traumatin), trans-1,3 diphenyl-2-propenone, trans-1,4-diphenyl-2-butene-1,4-dione, 9-oxo-12,13-epoxy-(10E)-octadecenoic acid (trans-EKODE-1b) and 9,13-dihydroxy-10-oxo-11-octadecenoic acid as substrates. Catalyzes the reduction of the 7-8 double bond of phenylpropanal substrates, such as p-coumaryl aldehyde and coniferyl aldehyde (in vitro). Has activity towards toxic substrates, such as 4-hydroxy-(2E)-nonenal (in vitro). May play a distinct role in plant antioxidant defense and is possibly involved in NAD(P)/NAD(P)H homeostasis. This is NADPH-dependent oxidoreductase 2-alkenal reductase from Arabidopsis thaliana (Mouse-ear cress).